The following is a 210-amino-acid chain: 3 beta-hydroxysteroid dehydrogenase/Delta 5--&gt;4-isomerase (210 aa).

The Proton acceptor role is filled by Y29. K33 serves as a coordination point for NAD(+).

The protein belongs to the 3-beta-HSD family.

The catalysed reaction is a 3beta-hydroxy-Delta(5)-steroid + NAD(+) = a 3-oxo-Delta(5)-steroid + NADH + H(+). It carries out the reaction a 3-oxo-Delta(5)-steroid = a 3-oxo-Delta(4)-steroid. Its pathway is lipid metabolism; steroid biosynthesis. Catalyzes the oxidative conversion of Delta(5)-ene-3-beta-hydroxy steroid, and the oxidative conversion of ketosteroids. The 3-beta-HSD enzymatic system plays a crucial role in the biosynthesis of all classes of hormonal steroids. During viral infection, steroid production contributes to virulence by inhibiting the host inflammatory response. This is 3 beta-hydroxysteroid dehydrogenase/Delta 5--&gt;4-isomerase (OPG174) from Variola virus (isolate Human/India/Ind3/1967) (VARV).